The primary structure comprises 25 residues: Putative cytochrome c4 (25 aa).

Positions 1 to 25 are disordered; that stretch reads QEDIEAGKQKSATCTACHGQEGNST. Heme contacts are provided by Cys14 and Cys17.

Binds 2 heme groups per subunit.

It localises to the periplasm. Functionally, diheme, high potential cytochrome c believed to be an intermediate electron donor to terminal oxidation systems. This is Putative cytochrome c4 from Aliivibrio fischeri (Vibrio fischeri).